A 445-amino-acid polypeptide reads, in one-letter code: Phosphoglucosamine mutase (445 aa).

Serine 102 (phosphoserine intermediate) is an active-site residue. Residues serine 102, aspartate 241, aspartate 243, and aspartate 245 each contribute to the Mg(2+) site. Residue serine 102 is modified to Phosphoserine.

This sequence belongs to the phosphohexose mutase family. Mg(2+) is required as a cofactor. In terms of processing, activated by phosphorylation.

It catalyses the reaction alpha-D-glucosamine 1-phosphate = D-glucosamine 6-phosphate. Functionally, catalyzes the conversion of glucosamine-6-phosphate to glucosamine-1-phosphate. The sequence is that of Phosphoglucosamine mutase from Pectobacterium carotovorum subsp. carotovorum (strain PC1).